Consider the following 1309-residue polypeptide: Disease resistance protein RPP2A (1309 aa).

In terms of domain architecture, TIR 1 spans 9–173 (RRYDVFPSFS…MVADDVSKKL (165 aa)). The active site involves glutamate 84. The NB-ARC 1 domain occupies 187–418 (EAHLEAMSSI…FKKTLRNYLP (232 aa)). Residues 488–585 (PNRRHSNDDW…KECILVFSCH (98 aa)) enclose the ALOG domain. The TIR 2 domain maps to 574-737 (REKECILVFS…EVVRNASLRL (164 aa)). In terms of domain architecture, NB-ARC 2 spans 755-987 (SQSTDVEIMG…IFLDLACFFR (233 aa)). Positions 1114–1141 (LPHGLDTLPDELSLLHWENYPLVYLPQK) form a coiled coil. LRR repeat units lie at residues 1145–1167 (VNLV…KKNL), 1168–1195 (EKLK…NLEH), 1214–1237 (CGKL…MVDL), 1238–1258 (TTLK…QDFA), 1259–1283 (PNLE…NLTE), and 1285–1307 (VTLD…EIIR).

The protein belongs to the disease resistance TIR-NB-LRR family.

The enzyme catalyses NAD(+) + H2O = ADP-D-ribose + nicotinamide + H(+). In terms of biological role, disease resistance protein that cooperates with RPP2B to confer resistance to Hyaloperonospora parasitica isolate Cala2. The sequence is that of Disease resistance protein RPP2A from Arabidopsis thaliana (Mouse-ear cress).